A 449-amino-acid chain; its full sequence is Biotin carboxylase (449 aa).

The 445-residue stretch at 1–445 (MLEKVLIANR…NIHYLEKKLG (445 aa)) folds into the Biotin carboxylation domain. ATP-binding positions include lysine 116, lysine 159, 165-166 (GG), 201-204 (EKFL), histidine 209, and histidine 236. One can recognise an ATP-grasp domain in the interval 120 to 317 (KDAMKRAGVP…IVKEMLRIAS (198 aa)). Residue lysine 238 coordinates hydrogencarbonate. Residues glutamate 276 and glutamate 288 each contribute to the ATP site. Mg(2+) is bound by residues glutamate 276, glutamate 288, and asparagine 290. Residues glutamate 276, glutamate 288, and asparagine 290 each coordinate Mn(2+). Hydrogencarbonate is bound by residues arginine 292, valine 295, and arginine 338. Residue arginine 292 is part of the active site. Arginine 338 provides a ligand contact to biotin.

Acetyl-CoA carboxylase is a heterohexamer of biotin carboxyl carrier protein, biotin carboxylase and the two subunits of carboxyl transferase in a 2:2 complex. Requires Mg(2+) as cofactor. It depends on Mn(2+) as a cofactor.

It catalyses the reaction N(6)-biotinyl-L-lysyl-[protein] + hydrogencarbonate + ATP = N(6)-carboxybiotinyl-L-lysyl-[protein] + ADP + phosphate + H(+). It participates in lipid metabolism; malonyl-CoA biosynthesis; malonyl-CoA from acetyl-CoA: step 1/1. In terms of biological role, this protein is a component of the acetyl coenzyme A carboxylase complex; first, biotin carboxylase catalyzes the carboxylation of the carrier protein and then the transcarboxylase transfers the carboxyl group to form malonyl-CoA. The chain is Biotin carboxylase (accC) from Pseudomonas aeruginosa (strain ATCC 15692 / DSM 22644 / CIP 104116 / JCM 14847 / LMG 12228 / 1C / PRS 101 / PAO1).